The chain runs to 222 residues: N-acetyltransferase 8B (222 aa).

The Cytoplasmic segment spans residues 1–42 (MVSYHICEYQDSDYKSVVDVFTKGAEEYIPSTFRHLLLLPRT). The chain crosses the membrane as a helical; Signal-anchor for type II membrane protein span at residues 43–67 (LLLLLGVSLALVLVSGSWLLAVVCI). The N-acetyltransferase domain maps to 62–217 (LAVVCIFFLL…VGIRFVQLNY (156 aa)). Over 68-222 (FFLLPFLWFL…VQLNYSFPSA (155 aa)) the chain is Lumenal. Position 99 is an N6-acetyllysine (Lys-99).

It belongs to the NAT8 family. Post-translationally, acetylation on Lys-99 modulates enzymatic activity.

Its subcellular location is the endoplasmic reticulum-Golgi intermediate compartment membrane. The protein localises to the endoplasmic reticulum membrane. The catalysed reaction is L-lysyl-[protein] + acetyl-CoA = N(6)-acetyl-L-lysyl-[protein] + CoA + H(+). Endoplasmic reticulum (ER)-membrane-bound lysine N-acetyltransferase catalyzing the N6-acetylation of lysine residues in the lumen of the ER in various proteins, including PROM1 and BACE1, using acetyl-CoA as acetyl donor. Thereby, may regulate apoptosis through the acetylation and the regulation of the expression of PROM1. Acetylates and stabilizes BACE1 immature protein, leading to increased steady-state levels in neurons. By acting on BACE1 expression, may regulate amyloid beta-peptide formation. N(6)-lysine acetylation in ER maintains protein homeostasis and regulates reticulophagy. The sequence is that of N-acetyltransferase 8B from Rattus norvegicus (Rat).